Consider the following 508-residue polypeptide: Light-independent protochlorophyllide reductase subunit B (508 aa).

[4Fe-4S] cluster is bound at residue Asp-36. The active-site Proton donor is Asp-294. Position 429-430 (429-430) interacts with substrate; sequence GM.

It belongs to the ChlB/BchB/BchZ family. In terms of assembly, protochlorophyllide reductase is composed of three subunits; ChlL, ChlN and ChlB. Forms a heterotetramer of two ChlB and two ChlN subunits. [4Fe-4S] cluster is required as a cofactor.

The enzyme catalyses chlorophyllide a + oxidized 2[4Fe-4S]-[ferredoxin] + 2 ADP + 2 phosphate = protochlorophyllide a + reduced 2[4Fe-4S]-[ferredoxin] + 2 ATP + 2 H2O. The protein operates within porphyrin-containing compound metabolism; chlorophyll biosynthesis (light-independent). In terms of biological role, component of the dark-operative protochlorophyllide reductase (DPOR) that uses Mg-ATP and reduced ferredoxin to reduce ring D of protochlorophyllide (Pchlide) to form chlorophyllide a (Chlide). This reaction is light-independent. The NB-protein (ChlN-ChlB) is the catalytic component of the complex. The sequence is that of Light-independent protochlorophyllide reductase subunit B from Thermosynechococcus vestitus (strain NIES-2133 / IAM M-273 / BP-1).